The sequence spans 182 residues: Keratin, type II cytoskeletal 68 kDa, component IA (182 aa).

An IF rod domain is found at Asp-1–Met-66. The segment at Asp-1–Met-66 is coil 2B. An H2 subdomain region spans residues Ser-67 to Ser-86. Residues Ser-67–Leu-182 form a tail region. Residues Ser-87–Gly-162 form a V2 subdomain region. Residues Gly-104–Gly-124 are compositionally biased toward gly residues. Residues Gly-104 to Leu-182 form a disordered region. 2 stretches are compositionally biased toward low complexity: residues Val-144 to Ser-158 and Ser-165 to Gln-176. The tract at residues Arg-163 to Leu-182 is E2 subdomain.

It belongs to the intermediate filament family. Heterotetramer of two type I and two type II keratins.

In Bos taurus (Bovine), this protein is Keratin, type II cytoskeletal 68 kDa, component IA.